The following is a 376-amino-acid chain: Succinyl-diaminopimelate desuccinylase (376 aa).

Histidine 64 contributes to the Zn(2+) binding site. Aspartate 66 is an active-site residue. Aspartate 97 lines the Zn(2+) pocket. Glutamate 131 acts as the Proton acceptor in catalysis. Zn(2+) contacts are provided by glutamate 132, glutamate 160, and histidine 347.

It belongs to the peptidase M20A family. DapE subfamily. In terms of assembly, homodimer. Zn(2+) is required as a cofactor. It depends on Co(2+) as a cofactor.

The catalysed reaction is N-succinyl-(2S,6S)-2,6-diaminopimelate + H2O = (2S,6S)-2,6-diaminopimelate + succinate. Its pathway is amino-acid biosynthesis; L-lysine biosynthesis via DAP pathway; LL-2,6-diaminopimelate from (S)-tetrahydrodipicolinate (succinylase route): step 3/3. Its function is as follows. Catalyzes the hydrolysis of N-succinyl-L,L-diaminopimelic acid (SDAP), forming succinate and LL-2,6-diaminopimelate (DAP), an intermediate involved in the bacterial biosynthesis of lysine and meso-diaminopimelic acid, an essential component of bacterial cell walls. The sequence is that of Succinyl-diaminopimelate desuccinylase from Wigglesworthia glossinidia brevipalpis.